We begin with the raw amino-acid sequence, 318 residues long: Thymidylate synthase (318 aa).

DUMP-binding positions include Arg25 and Arg180–Arg181. Cys200 acts as the Nucleophile in catalysis. DUMP is bound by residues Arg220–Asp223, Asn231, and His261–Tyr263. Asp223 contributes to the (6R)-5,10-methylene-5,6,7,8-tetrahydrofolate binding site. (6R)-5,10-methylene-5,6,7,8-tetrahydrofolate is bound at residue Ala317.

The protein belongs to the thymidylate synthase family. Bacterial-type ThyA subfamily. Homodimer.

It is found in the cytoplasm. It carries out the reaction dUMP + (6R)-5,10-methylene-5,6,7,8-tetrahydrofolate = 7,8-dihydrofolate + dTMP. It functions in the pathway pyrimidine metabolism; dTTP biosynthesis. In terms of biological role, catalyzes the reductive methylation of 2'-deoxyuridine-5'-monophosphate (dUMP) to 2'-deoxythymidine-5'-monophosphate (dTMP) while utilizing 5,10-methylenetetrahydrofolate (mTHF) as the methyl donor and reductant in the reaction, yielding dihydrofolate (DHF) as a by-product. This enzymatic reaction provides an intracellular de novo source of dTMP, an essential precursor for DNA biosynthesis. The sequence is that of Thymidylate synthase from Ligilactobacillus salivarius (strain UCC118) (Lactobacillus salivarius).